Consider the following 506-residue polypeptide: Aerotaxis receptor (506 aa).

The Cytoplasmic portion of the chain corresponds to 1 to 166; the sequence is MSSHPYVTQQ…PSLPLRWRAR (166 aa). A helical transmembrane segment spans residues 167–186; that stretch reads GVMTLMFILLAAMLWFVAAP. Residues 187–190 are Periplasmic-facing; it reads VVTY. A helical membrane pass occupies residues 191-209; that stretch reads ILCALVVLLASACFEWQIV. Topologically, residues 210–506 are cytoplasmic; it reads RPIENVAHQA…RLEDAVTVLH (297 aa). The region spanning 263 to 492 is the Methyl-accepting transducer domain; the sequence is QVSSVRNGSE…ESAQVSAMVK (230 aa).

The protein belongs to the methyl-accepting chemotaxis (MCP) protein family.

The protein resides in the cell inner membrane. In terms of biological role, signal transducer for aerotaxis. The aerotactic response is the accumulation of cells around air bubbles. The nature of the sensory stimulus detected by this protein is the proton motive force or cellular redox state. It uses a FAD prosthetic group as a redox sensor to monitor oxygen levels. The protein is Aerotaxis receptor (aer) of Escherichia coli (strain K12).